Consider the following 373-residue polypeptide: tRNA-specific 2-thiouridylase MnmA (373 aa).

Residues 12 to 19 (GMSGGVDS) and methionine 38 each bind ATP. The interval 98-100 (NPD) is interaction with target base in tRNA. Catalysis depends on cysteine 103, which acts as the Nucleophile. A disulfide bridge links cysteine 103 with cysteine 200. Glycine 127 contacts ATP. The interaction with tRNA stretch occupies residues 150-152 (KDQ). Cysteine 200 functions as the Cysteine persulfide intermediate in the catalytic mechanism. Residues 312-313 (RY) form an interaction with tRNA region.

Belongs to the MnmA/TRMU family.

It is found in the cytoplasm. It catalyses the reaction S-sulfanyl-L-cysteinyl-[protein] + uridine(34) in tRNA + AH2 + ATP = 2-thiouridine(34) in tRNA + L-cysteinyl-[protein] + A + AMP + diphosphate + H(+). In terms of biological role, catalyzes the 2-thiolation of uridine at the wobble position (U34) of tRNA, leading to the formation of s(2)U34. In Streptococcus pyogenes serotype M49 (strain NZ131), this protein is tRNA-specific 2-thiouridylase MnmA.